Reading from the N-terminus, the 272-residue chain is WIMGHMVNDLSLVDEFLNDGANSLELDVEFSSSGTAQRTHHGFPCDCFRYCTNSEKFSTYLDYIRQLTTPGNSKFQSRLILLVMDLKLNPLSSSAAYNAGADVALNLLNHYWQRGESEARAYIVLSLSTIGGAEFISGFKSTMEKEGFADKYYDKIGWDFSGNEDLQQIRDVLENYGIREHIWQGDGITNCLPRGDSRLKEALNLRYSPSYIYADKVYTWSIDEENSIKHALWLGVDGVMTNHPERVIEVLGKSKYSDKLRLATYDDNPWEK.

Residue His-5 is part of the active site. Glu-25 and Asp-27 together coordinate Mg(2+). His-41 acts as the Nucleophile in catalysis. 2 cysteine pairs are disulfide-bonded: Cys-45/Cys-51 and Cys-47/Cys-191. Asp-85 is a Mg(2+) binding site.

This sequence belongs to the arthropod phospholipase D family. Class II subfamily. Mg(2+) is required as a cofactor. Expressed by the venom gland.

Its subcellular location is the secreted. The catalysed reaction is an N-(acyl)-sphingosylphosphocholine = an N-(acyl)-sphingosyl-1,3-cyclic phosphate + choline. It carries out the reaction an N-(acyl)-sphingosylphosphoethanolamine = an N-(acyl)-sphingosyl-1,3-cyclic phosphate + ethanolamine. It catalyses the reaction a 1-acyl-sn-glycero-3-phosphocholine = a 1-acyl-sn-glycero-2,3-cyclic phosphate + choline. The enzyme catalyses a 1-acyl-sn-glycero-3-phosphoethanolamine = a 1-acyl-sn-glycero-2,3-cyclic phosphate + ethanolamine. Dermonecrotic toxins cleave the phosphodiester linkage between the phosphate and headgroup of certain phospholipids (sphingolipid and lysolipid substrates), forming an alcohol (often choline) and a cyclic phosphate. This toxin acts on sphingomyelin (SM). It may also act on ceramide phosphoethanolamine (CPE), lysophosphatidylcholine (LPC) and lysophosphatidylethanolamine (LPE), but not on lysophosphatidylserine (LPS), and lysophosphatidylglycerol (LPG). It acts by transphosphatidylation, releasing exclusively cyclic phosphate products as second products. Induces dermonecrosis, hemolysis, increased vascular permeability, edema, inflammatory response, and platelet aggregation. The polypeptide is Dermonecrotic toxin SpeSicTox-betaIB1b (Sicarius peruensis (Six-eyed sand spider)).